The sequence spans 207 residues: Cytochrome c oxidase subunit 3 (207 aa).

The next 5 helical transmembrane spans lie at 28–48 (FLGF…LFAT), 70–90 (VVFM…YAIY), 102–122 (LWFG…IYEF), 144–164 (LVGT…TLMI), and 186–206 (WHFI…MGMV).

This sequence belongs to the cytochrome c oxidase subunit 3 family.

It localises to the cell membrane. It catalyses the reaction 4 Fe(II)-[cytochrome c] + O2 + 8 H(+)(in) = 4 Fe(III)-[cytochrome c] + 2 H2O + 4 H(+)(out). This is Cytochrome c oxidase subunit 3 (ctaE) from Bacillus sp. (strain PS3).